The following is a 189-amino-acid chain: MTEYKLVVVGAGGVGKSALTIQLIQNHFVDEYDPTIEDSYRKQVVIDGETCLLDILDTAGQEEYSAMRDQYMRTGEGFLCVFAINNSKSFADINLYREQIKRVKDSDDVPMVLVGNKCDLPTRTVDTKQAHELAKSYGIPFIETSAKTRQGVEDAFYTLVREIRQYRMKKLNSSDDGTQGCMGLPCVVM.

GTP contacts are provided by residues 10–18 (GAGGVGKSA) and 29–30 (VD). The short motif at 32–40 (YDPTIEDSY) is the Effector region element. Threonine 35 is a glycosylation site ((Microbial infection) O-linked (Glc) threonine; by P.sordellii toxin TcsL). GTP is bound at residue 57 to 61 (DTAGQ). Serine 89 bears the Phosphoserine mark. 116 to 119 (NKCD) is a binding site for GTP. The segment at 166-185 (YRMKKLNSSDDGTQGCMGLP) is hypervariable region. Lysine 170 is covalently cross-linked (Glycyl lysine isopeptide (Lys-Gly) (interchain with G-Cter in ubiquitin)). A lipid anchor (S-palmitoyl cysteine) is attached at cysteine 181. Residue cysteine 186 is the site of S-farnesyl cysteine attachment. A propeptide spans 187 to 189 (VVM) (removed in mature form).

It belongs to the small GTPase superfamily. Ras family. In terms of assembly, interacts (active GTP-bound form preferentially) with RGS14. Interacts (active GTP-bound form) with RASSF7. Interacts (active GTP-bound form) with both SHOC2 and PP1c (all isoforms) to form a tertiary complex; SHOC2 and PP1c preferably bind M-Ras/MRAS, but they also bind K-Ras/KRAS, N-Ras/NRAS and H-Ras/HRAS. In terms of processing, palmitoylated by the ZDHHC9-GOLGA7 complex. Depalmitoylated by ABHD17A, ABHD17B and ABHD17C. A continuous cycle of de- and re-palmitoylation regulates rapid exchange between plasma membrane and Golgi. Acetylation at Lys-104 prevents interaction with guanine nucleotide exchange factors (GEFs). Post-translationally, fatty-acylated at Lys-169 and/or Lys-170. In terms of processing, ubiquitinated by the BCR(LZTR1) E3 ubiquitin ligase complex at Lys-170 in a non-degradative manner, leading to inhibit Ras signaling by decreasing Ras association with membranes. Phosphorylation at Ser-89 enhances NRAS association with its downstream effectors. Post-translationally, (Microbial infection) Glucosylated at Thr-35 by P.sordellii toxin TcsL.

Its subcellular location is the cell membrane. It localises to the golgi apparatus membrane. The enzyme catalyses GTP + H2O = GDP + phosphate + H(+). Its activity is regulated as follows. Alternates between an inactive form bound to GDP and an active form bound to GTP. Activated by a guanine nucleotide-exchange factor (GEF) and inactivated by a GTPase-activating protein (GAP). Ras proteins bind GDP/GTP and possess intrinsic GTPase activity. The chain is GTPase NRas (NRAS) from Homo sapiens (Human).